Consider the following 195-residue polypeptide: Cysteine/O-acetylserine efflux protein (195 aa).

The Periplasmic segment spans residues 1–9; the sequence is MTPILLSAF. Residues 10–32 traverse the membrane as a helical segment; that stretch reads WTYTLITAMTPGPNNILALSSAT. Over 33-46 the chain is Cytoplasmic; sequence SHGFRQSTRVLAGM. The helical transmembrane segment at 47–67 threads the bilayer; sequence SLGFLIVMLLCAGISFSLAVI. Over 68–69 the chain is Periplasmic; the sequence is DP. A helical transmembrane segment spans residues 70 to 90; that stretch reads AAVHLLSWAGAAYIVWLAWKI. The Cytoplasmic segment spans residues 91 to 104; the sequence is ATSPTKEDGLQAKP. A helical transmembrane segment spans residues 105–125; the sequence is ISFWASFALQFVNVKIILYGV. Residues 126-141 lie on the Periplasmic side of the membrane; sequence TALSTFVLPQTQALSW. Residues 142–162 form a helical membrane-spanning segment; sequence VVGVSVLLAMIGTFGNVCWAL. Over 163 to 176 the chain is Cytoplasmic; the sequence is AGHLFQRLFRQYGR. Residues 177–194 form a helical membrane-spanning segment; sequence QLNIVLALLLVYCAVRIF. Tyrosine 195 is a topological domain (periplasmic).

Belongs to the Rht family.

It localises to the cell inner membrane. The enzyme catalyses O-acetyl-L-serine(in) = O-acetyl-L-serine(out). It catalyses the reaction L-cysteine(in) = L-cysteine(out). Exporter of O-acetylserine (OAS) and cysteine. The polypeptide is Cysteine/O-acetylserine efflux protein (eamB) (Shigella flexneri serotype 5b (strain 8401)).